The following is a 463-amino-acid chain: 23S rRNA (uracil(1939)-C(5))-methyltransferase RlmD (463 aa).

Positions 6 to 76 (KSRKPQQPEY…KRLEEAEMVA (71 aa)) constitute a TRAM domain. Positions 90, 96, 99, and 178 each coordinate [4Fe-4S] cluster. S-adenosyl-L-methionine contacts are provided by Q288, F317, N322, E341, D368, and D389. Residue C415 is the Nucleophile of the active site.

Belongs to the class I-like SAM-binding methyltransferase superfamily. RNA M5U methyltransferase family. RlmD subfamily.

It carries out the reaction uridine(1939) in 23S rRNA + S-adenosyl-L-methionine = 5-methyluridine(1939) in 23S rRNA + S-adenosyl-L-homocysteine + H(+). Catalyzes the formation of 5-methyl-uridine at position 1939 (m5U1939) in 23S rRNA. In Acinetobacter baumannii (strain ACICU), this protein is 23S rRNA (uracil(1939)-C(5))-methyltransferase RlmD.